The chain runs to 179 residues: tRNA (cytidine(56)-2'-O)-methyltransferase (179 aa).

Residues Leu82, 110–114, and 128–135 contribute to the S-adenosyl-L-methionine site; these read GAEKV and VGNQPHSE.

Belongs to the aTrm56 family. As to quaternary structure, homodimer.

It is found in the cytoplasm. It carries out the reaction cytidine(56) in tRNA + S-adenosyl-L-methionine = 2'-O-methylcytidine(56) in tRNA + S-adenosyl-L-homocysteine + H(+). In terms of biological role, specifically catalyzes the AdoMet-dependent 2'-O-ribose methylation of cytidine at position 56 in tRNAs. The chain is tRNA (cytidine(56)-2'-O)-methyltransferase from Methanocaldococcus jannaschii (strain ATCC 43067 / DSM 2661 / JAL-1 / JCM 10045 / NBRC 100440) (Methanococcus jannaschii).